A 107-amino-acid polypeptide reads, in one-letter code: Iron-binding protein IscA (107 aa).

The Fe cation site is built by cysteine 35, cysteine 99, and cysteine 101.

It belongs to the HesB/IscA family. In terms of assembly, homodimer; may form tetramers and higher multimers. It depends on Fe cation as a cofactor.

In terms of biological role, is able to transfer iron-sulfur clusters to apo-ferredoxin. Multiple cycles of [2Fe2S] cluster formation and transfer are observed, suggesting that IscA acts catalytically. Recruits intracellular free iron so as to provide iron for the assembly of transient iron-sulfur cluster in IscU in the presence of IscS, L-cysteine and the thioredoxin reductase system TrxA/TrxB. This chain is Iron-binding protein IscA, found in Klebsiella pneumoniae subsp. pneumoniae (strain ATCC 700721 / MGH 78578).